The chain runs to 1373 residues: Poly(A) RNA polymerase gld-2 homolog B (1373 aa).

Over residues 75–91 (NSCHSSNSSSNTSNNNN) the composition is skewed to low complexity. 6 disordered regions span residues 75-155 (NSCH…QEKQ), 175-340 (SDCK…FWKT), 425-543 (PDST…QQQK), 734-770 (PQQQQQQQLSSHPIPTGTSSHPPPPPPPHMFFHFADG), 802-866 (CGSG…ALGS), and 880-928 (HPLH…PTPV). Residues 96–112 (GQQQQPLHYCNSNNSHS) are compositionally biased toward polar residues. Low complexity-rich tracts occupy residues 130 to 152 (QQQQQPSSFFQRQQQQHQMQMQQ), 180 to 219 (SDSNNNSTSSSNNNSTISSNNNNTSSASNNNTGSSSSCSN), 228 to 251 (NENSSSSSSSNNNNISCRNNNTSS), and 274 to 284 (ESGSSEGAAES). 2 stretches are compositionally biased toward polar residues: residues 295 to 340 (CNSN…FWKT) and 430 to 442 (KSSSNTGGSNMIR). A compositionally biased stretch (low complexity) spans 443-485 (SSSNGNSNFSRHQYGHQSTGSGYQQQQQRYRNAQNVYQQYQHQ). Residues 486–502 (QQHHAQQHTHPHFRRKH) show a composition bias toward basic residues. Composition is skewed to low complexity over residues 735–753 (QQQQQQQLSSHPIPTGTSS) and 819–844 (AGALRPASPALSSSSLGSESQWSGTS). The span at 855-866 (PSISPTPSALGS) shows a compositional bias: polar residues. A compositionally biased stretch (low complexity) spans 880-890 (HPLHQQHPPSH). The tract at residues 945 to 1373 (RYLAQARNIE…FAETTAAHVA (429 aa)) is sufficent for interaction with Dcr-2. The Mg(2+) site is built by aspartate 1029 and aspartate 1031. The PAP-associated domain maps to 1211–1272 (TLGEHLLGFF…NIEEPFDLSN (62 aa)). The segment covering 1320-1341 (LQQHQQQFEQQLHHPISGQQRS) has biased composition (low complexity). The tract at residues 1320–1359 (LQQHQQQFEQQLHHPISGQQRSAGGGGDGANPVPSTLNPD) is disordered.

The protein belongs to the DNA polymerase type-B-like family. GLD2 subfamily. As to quaternary structure, interacts with orb, an RNA-binding protein, generating an ovarian cytoplasmic polyadenylation complex. Interacts (via C-terminus) with Dcr-2. Mg(2+) is required as a cofactor. Mn(2+) serves as cofactor. As to expression, expressed in ovaries. Not expressed in adult males.

The protein resides in the cytoplasm. The enzyme catalyses RNA(n) + ATP = RNA(n)-3'-adenine ribonucleotide + diphosphate. Functionally, cytoplasmic poly(A) RNA polymerase that adds successive AMP monomers to the 3'-end of specific maternal RNAs (bcd, Tl, and tor), forming a poly(A) tail, during late oogenesis and early embryogenesis. In contrast to the canonical nuclear poly(A) RNA polymerase, it only adds poly(A) to selected cytoplasmic mRNAs. Required for localization of mRNAs to both poles of the egg, to recruit or maintain known centrosomal proteins with two types of microtubule organizing centers (MTOCs): the central MTOC that forms between the meiosis II tandem spindles and the centrosomes of the mitotic spindle. Required at the final stage of oogenesis for meiosis I metaphase arrest and for progression beyond this stage. Functions with the RNA-binding protein Dcr-2 to promote cytoplasmic polyadenylation and translational activation of certain mRNAs such as Tl and r2d2. As a consequence, is involved in regulating Toll immune signaling and promoting resistance to fungal infection. The chain is Poly(A) RNA polymerase gld-2 homolog B (wisp) from Drosophila melanogaster (Fruit fly).